Reading from the N-terminus, the 122-residue chain is Large ribosomal subunit protein uL18 (122 aa).

This sequence belongs to the universal ribosomal protein uL18 family. In terms of assembly, part of the 50S ribosomal subunit; part of the 5S rRNA/L5/L18/L25 subcomplex. Contacts the 5S and 23S rRNAs.

Functionally, this is one of the proteins that bind and probably mediate the attachment of the 5S RNA into the large ribosomal subunit, where it forms part of the central protuberance. This chain is Large ribosomal subunit protein uL18, found in Geobacter sp. (strain M21).